We begin with the raw amino-acid sequence, 394 residues long: MSRLRWLTAGESHGPALVATLEGLPAGVPITTEMVADHLARRRLGYGRGARMKFERDEVTFLGGVRHGLTMGSPVAVMVGNTEWPKWEQVMAADPVDPEVLAGLARNAPLTRPRPGHADLAGMQKYGFDEARPILERASARETAARVALGAVARSYLKETAGVEIVSHVVELASAKAPHGVYPTPADVERLDADPVRCLDADASKAMVAEIDQAHKDGDTLGGVVEVLAYGVPVGLGSHVHWDRKLDARLAGALMGIQAIKGVEIGDGFELARVPGSRAHDEIVGTPDGIRRVSGRSGGTEGGLTTGELLRVRAAMKPIATVPRALKTVDVATGEAAQAHHQRSDVSAVPAAGIVAEAMVALVLADAVAEKFGGDSVTETRRNVRSYLDNLDIR.

2 residues coordinate NADP(+): Arg42 and Arg48. FMN contacts are provided by residues 137–139, 258–259, Gly302, 317–321, and Arg343; these read RAS, QA, and KPIAT.

The protein belongs to the chorismate synthase family. In terms of assembly, homotetramer. FMNH2 serves as cofactor.

The catalysed reaction is 5-O-(1-carboxyvinyl)-3-phosphoshikimate = chorismate + phosphate. It participates in metabolic intermediate biosynthesis; chorismate biosynthesis; chorismate from D-erythrose 4-phosphate and phosphoenolpyruvate: step 7/7. Its function is as follows. Catalyzes the anti-1,4-elimination of the C-3 phosphate and the C-6 proR hydrogen from 5-enolpyruvylshikimate-3-phosphate (EPSP) to yield chorismate, which is the branch point compound that serves as the starting substrate for the three terminal pathways of aromatic amino acid biosynthesis. This reaction introduces a second double bond into the aromatic ring system. This is Chorismate synthase from Streptomyces coelicolor (strain ATCC BAA-471 / A3(2) / M145).